Consider the following 994-residue polypeptide: Sarcoplasmic/endoplasmic reticulum calcium ATPase 1 (994 aa).

The Cytoplasmic segment spans residues 1-48 (MENAHAKTAEECLAFFGVNESVGLSGEQVRRALEKYGHNELPAEEGKT). A helical membrane pass occupies residues 49–69 (IWELVVEQFEDLLVRILLLAA). Topologically, residues 70–89 (CISFVLAWFEEGEETITAFV) are lumenal. A helical transmembrane segment spans residues 90-110 (EPFVILLILIANAVVGVWQER). At 111 to 253 (NAENAIEALK…QDKTPLQQKL (143 aa)) the chain is on the cytoplasmic side. A helical transmembrane segment spans residues 254-273 (DEFGEQLSKVISLICVAVWL). Topologically, residues 274-295 (INIGHFNDPVHGGSWIRGAIYY) are lumenal. A helical transmembrane segment spans residues 296 to 313 (FKIAVALAVAAIPEGLPA). Ca(2+) is bound by residues V304, A305, I307, and E309. Residues 314-757 (VITTCLALGT…EEGRAIYNNM (444 aa)) are Cytoplasmic-facing. D351 serves as the catalytic 4-aspartylphosphate intermediate. The Mg(2+) site is built by D351 and T353. ATP is bound by residues T353, E442, R489, K515, R560, T625, G626, D627, R678, and K684. A Mg(2+)-binding site is contributed by D703. N706 is a binding site for ATP. Residues 758–777 (KQFIRYLISSNVGEVVCIFL) form a helical membrane-spanning segment. N768 and E771 together coordinate Ca(2+). The Lumenal segment spans residues 778–787 (TAALGLPEAL). Residues 788–808 (IPVQLLWVNLVTDGLPATALG) traverse the membrane as a helical segment. The tract at residues 788–808 (IPVQLLWVNLVTDGLPATALG) is interaction with PLN. Residues N796, T799, and D800 each contribute to the Ca(2+) site. At 809–828 (FNPPDLDIMDKPPRSPKEPL) the chain is on the cytoplasmic side. The helical transmembrane segment at 829 to 851 (ISGWLFFRYLAIGGYVGAATVGA) threads the bilayer. Residues 852-897 (AAWWFLYAEDGPSLTYHQLTHFMQCTHHNAEFEGVDCDIFESPVPM) are Lumenal-facing. An intrachain disulfide couples C876 to C888. Residues 898 to 917 (TMALSVLVTIEMCNALNSLS) form a helical membrane-spanning segment. Residue E908 coordinates Ca(2+). Topologically, residues 918–930 (ENQSLLRMPPWVN) are cytoplasmic. A helical transmembrane segment spans residues 931–949 (IWLVGSICLSMSLHFVILY). The tract at residues 932 to 943 (WLVGSICLSMSL) is interaction with PLN. Topologically, residues 950-964 (VDPLPMIFKLTHLDL) are lumenal. Residues 965–985 (AHWLVVLRISFPVILLDEALK) form a helical membrane-spanning segment. Topologically, residues 986–994 (FVARNYLEA) are cytoplasmic.

It belongs to the cation transport ATPase (P-type) (TC 3.A.3) family. Type IIA subfamily. Interacts with sarcolipin (SLN). Interacts with phospholamban (PLN). Interacts with myoregulin (MRLN). Interacts with DWORF. Requires Mg(2+) as cofactor.

Its subcellular location is the endoplasmic reticulum membrane. The protein resides in the sarcoplasmic reticulum membrane. It carries out the reaction Ca(2+)(in) + ATP + H2O = Ca(2+)(out) + ADP + phosphate + H(+). Its activity is regulated as follows. Inhibited by sarcolipin (SLN) and myoregulin (MRLN). Also shown to be inhibited by phospholamban (PLN) in vitro. Enhanced by DWORF; DWORF increases activity by displacing sarcolipin (SLN), phospholamban (PLN) and myoregulin (MRLN). In terms of biological role, key regulator of striated muscle performance by acting as the major Ca(2+) ATPase responsible for the reuptake of cytosolic Ca(2+) into the sarcoplasmic reticulum. Catalyzes the hydrolysis of ATP coupled with the translocation of calcium from the cytosol to the sarcoplasmic reticulum lumen. Contributes to calcium sequestration involved in muscular excitation/contraction. The polypeptide is Sarcoplasmic/endoplasmic reticulum calcium ATPase 1 (ATP2A1) (Gallus gallus (Chicken)).